A 489-amino-acid polypeptide reads, in one-letter code: MSVYGLQRLYIAGAHADATSGKTFDTFDPATGELLARVQQASADDVDRAVASAREGQREWAAMTAMQRSRILRRAVELLRERNDALAELEMRDTGKPIAETRAVDIVTGADVIEYYAGLATAIEGLQVPLRPESFVYTRREPLGVCAGIGAWNYPIQIACWKSAPALAAGNAMIFKPSEVTPLSALKLAEIYTEAGVPAGVFNVVQGDGSVGALLSAHPGIAKVSFTGGVETGKKVMSLAGASSLKEVTMELGGKSPLIVFDDADLDRAADIAVTANFFSAGQVCTNGTRVFVQQAVKDAFVERVLARVARIRVGKPSDSDTNFGPLASAAQLDKVLGYIDSGKAEGAKLLAGGARLVNDHFASGQYVAPTVFGDCRDDMRIVREEIFGPVMSILSFETEDEAIARANATDYGLAAGVVTENLSRAHRAIHRLEAGICWINTWGESPAEMPVGGYKQSGVGRENGITTLEHYTRIKSVQVELGRYQPVF.

K(+) contacts are provided by Thr-26 and Asp-93. Position 150 to 152 (150 to 152 (GAW)) interacts with NAD(+). Lys-162 (charge relay system) is an active-site residue. 176 to 179 (KPSE) contributes to the NAD(+) binding site. Residue Val-180 participates in K(+) binding. 229 to 232 (GVET) is an NAD(+) binding site. Leu-245 provides a ligand contact to K(+). The active-site Proton acceptor is Glu-251. The NAD(+) site is built by Gly-253, Cys-285, and Glu-386. Cys-285 acts as the Nucleophile in catalysis. Cys-285 is modified (cysteine sulfenic acid (-SOH)). K(+) contacts are provided by Lys-456 and Gly-459. Catalysis depends on Glu-463, which acts as the Charge relay system.

Belongs to the aldehyde dehydrogenase family. As to quaternary structure, dimer of dimers. The cofactor is K(+).

The enzyme catalyses betaine aldehyde + NAD(+) + H2O = glycine betaine + NADH + 2 H(+). The protein operates within amine and polyamine biosynthesis; betaine biosynthesis via choline pathway; betaine from betaine aldehyde: step 1/1. Its function is as follows. Involved in the biosynthesis of the osmoprotectant glycine betaine. Catalyzes the irreversible oxidation of betaine aldehyde to the corresponding acid. The polypeptide is Betaine aldehyde dehydrogenase (Burkholderia pseudomallei (strain 1106a)).